Reading from the N-terminus, the 319-residue chain is Myoblast determination protein 1 (319 aa).

M1 participates in a covalent cross-link: Peptide (Met-Gly) (interchain with G-Cter in ubiquitin). Residue K104 is modified to N6-methyllysine; by EHMT2. The region spanning 109 to 160 (DRRKAATMRERRRLSKVNEAFETLKRCTSSNPNQRLPKVEILRNAIRYIEGL) is the bHLH domain. 2 disordered regions span residues 174–222 (AAAA…GARR) and 267–319 (PALL…YQVL). Residues 197-207 (SDASSPRSNCS) show a composition bias toward polar residues. The span at 267 to 276 (PALLLADAPP) shows a compositional bias: low complexity.

Efficient DNA binding requires dimerization with another bHLH protein. Seems to form active heterodimers with ITF-2. Interacts with SUV39H1. Interacts with DDX5. Interacts with CHD2. Interacts with TSC22D3. Interacts with SETD3. Interacts with P-TEFB complex; promotes the transcriptional activity of MYOD1 through its CDK9-mediated phosphorylation. Interacts with CSRP3. Interacts with NUPR1. In terms of processing, phosphorylated by CDK9. This phosphorylation promotes its function in muscle differentiation. Acetylated by a complex containing EP300 and PCAF. The acetylation is essential to activate target genes. Conversely, its deacetylation by SIRT1 inhibits its function. Post-translationally, ubiquitinated on the N-terminus; which is required for proteasomal degradation. In terms of processing, methylation at Lys-104 by EHMT2/G9a inhibits myogenic activity.

It localises to the nucleus. Acts as a transcriptional activator that promotes transcription of muscle-specific target genes and plays a role in muscle differentiation. Together with MYF5 and MYOG, co-occupies muscle-specific gene promoter core region during myogenesis. Induces fibroblasts to differentiate into myoblasts. Interacts with and is inhibited by the twist protein. This interaction probably involves the basic domains of both proteins. The polypeptide is Myoblast determination protein 1 (MYOD1) (Ovis aries (Sheep)).